A 67-amino-acid polypeptide reads, in one-letter code: MKKNIHPKWYKHSIVYGNGQQILTVGSTKPELHVEVWSSIHPFYTGSQKQLDTEGRIEKFMRKYGMK.

The protein belongs to the bacterial ribosomal protein bL31 family. Type A subfamily. In terms of assembly, part of the 50S ribosomal subunit.

The protein resides in the plastid. The protein localises to the chloroplast. Binds the 23S rRNA. The protein is Large ribosomal subunit protein bL31c (rpl31) of Cyanidioschyzon merolae (strain NIES-3377 / 10D) (Unicellular red alga).